The primary structure comprises 132 residues: Small ribosomal subunit protein uS8 (132 aa).

The protein belongs to the universal ribosomal protein uS8 family. As to quaternary structure, part of the 30S ribosomal subunit. Contacts proteins S5 and S12.

Functionally, one of the primary rRNA binding proteins, it binds directly to 16S rRNA central domain where it helps coordinate assembly of the platform of the 30S subunit. This Clostridium botulinum (strain Alaska E43 / Type E3) protein is Small ribosomal subunit protein uS8.